We begin with the raw amino-acid sequence, 164 residues long: GTP-dependent dephospho-CoA kinase (164 aa).

Residues aspartate 40, valine 41, valine 42, aspartate 59, lysine 61, and glutamate 113 each contribute to the GTP site.

The protein belongs to the GTP-dependent DPCK family.

The enzyme catalyses 3'-dephospho-CoA + GTP = GDP + CoA + H(+). It functions in the pathway cofactor biosynthesis; coenzyme A biosynthesis. In terms of biological role, catalyzes the GTP-dependent phosphorylation of the 3'-hydroxyl group of dephosphocoenzyme A to form coenzyme A (CoA). The chain is GTP-dependent dephospho-CoA kinase from Sulfolobus acidocaldarius (strain ATCC 33909 / DSM 639 / JCM 8929 / NBRC 15157 / NCIMB 11770).